The chain runs to 38 residues: Cytochrome b6-f complex subunit 5 (38 aa).

The helical transmembrane segment at 5–25 (LLLGIVLGLIPITLAGLFVAA) threads the bilayer.

This sequence belongs to the PetG family. In terms of assembly, the 4 large subunits of the cytochrome b6-f complex are cytochrome b6, subunit IV (17 kDa polypeptide, PetD), cytochrome f and the Rieske protein, while the 4 small subunits are PetG, PetL, PetM and PetN. The complex functions as a dimer.

It localises to the cellular thylakoid membrane. Functionally, component of the cytochrome b6-f complex, which mediates electron transfer between photosystem II (PSII) and photosystem I (PSI), cyclic electron flow around PSI, and state transitions. PetG is required for either the stability or assembly of the cytochrome b6-f complex. This is Cytochrome b6-f complex subunit 5 from Rippkaea orientalis (strain PCC 8801 / RF-1) (Cyanothece sp. (strain PCC 8801)).